The primary structure comprises 96 residues: Integration host factor subunit beta (96 aa).

Positions 59 to 86 are disordered; sequence RVGRNPKTGETVELDGKHVPHFKPGKEL. A compositionally biased stretch (basic and acidic residues) spans 72 to 86; that stretch reads LDGKHVPHFKPGKEL.

This sequence belongs to the bacterial histone-like protein family. In terms of assembly, heterodimer of an alpha and a beta chain.

Functionally, this protein is one of the two subunits of integration host factor, a specific DNA-binding protein that functions in genetic recombination as well as in transcriptional and translational control. The chain is Integration host factor subunit beta from Pseudoalteromonas atlantica (strain T6c / ATCC BAA-1087).